We begin with the raw amino-acid sequence, 365 residues long: Endophilin-B1 (365 aa).

Methionine 1 is subject to N-acetylmethionine. The tract at residues 1 to 30 is membrane-binding amphipathic helix; it reads MNIMDFNVKKLAADAGTFLSRAVQFTEEKL. The required for membrane binding stretch occupies residues 1 to 37; that stretch reads MNIMDFNVKKLAADAGTFLSRAVQFTEEKLGQAEKTE. The BAR domain maps to 27–261; the sequence is EEKLGQAEKT…LGSFPSNYLS (235 aa). Threonine 145 is subject to Phosphothreonine; by CDK5. Positions 155–195 form a coiled coil; it reads YKTIAKERKLLQNKRLDLDAAKTRLKKAKAAETRNSSEQEL. The region spanning 305–365 is the SH3 domain; that stretch reads SGSRKARVLY…VPITYLELLN (61 aa).

This sequence belongs to the endophilin family. Homodimer, and heterodimer with SH3GLB2. Binds BAX; induction of apoptosis augments BAX binding. Binds DNM1, HTT, AMPH, BIN1 and ARFGAP1. Interacts with UVRAG; UVRAG bridges the interaction to BECN1 indicative for an association with the PI3K complex II (PI3KC3-C2). Post-translationally, phosphorylated at Thr-145 by CDK5; this phosphorylation is required for autophagy induction in starved neurons and facilitates homodimerization. As to expression, highly expressed in heart, skeletal muscle, kidney and placenta. Detected at lower levels in brain, colon, thymus, spleen, liver, small intestine, lung and peripheral blood leukocytes.

The protein resides in the cytoplasm. Its subcellular location is the golgi apparatus membrane. It is found in the mitochondrion outer membrane. The protein localises to the cytoplasmic vesicle. It localises to the autophagosome membrane. The protein resides in the midbody. May be required for normal outer mitochondrial membrane dynamics. Required for coatomer-mediated retrograde transport in certain cells. May recruit other proteins to membranes with high curvature. May promote membrane fusion. Involved in activation of caspase-dependent apoptosis by promoting BAX/BAK1 activation. Isoform 1 acts proapoptotic in fibroblasts. Involved in caspase-independent apoptosis during nutrition starvation and involved in the regulation of autophagy. Activates lipid kinase activity of PIK3C3 during autophagy probably by associating with the PI3K complex II (PI3KC3-C2). Associated with PI3KC3-C2 during autophagy may regulate the trafficking of ATG9A from the Golgi complex to the peripheral cytoplasm for the formation of autophagosomes by inducing Golgi membrane tubulation and fragmentation. Involved in regulation of degradative endocytic trafficking and cytokinesis, probably in the context of PI3KC3-C2. Isoform 2 acts antiapoptotic in neuronal cells; involved in maintenance of mitochondrial morphology and promotes neuronal viability. In Homo sapiens (Human), this protein is Endophilin-B1 (SH3GLB1).